Consider the following 491-residue polypeptide: Ketol-acid reductoisomerase (NADP(+)) (491 aa).

The KARI N-terminal Rossmann domain occupies 15–208; the sequence is AQLGKCRFMA…GGHRAGVLES (194 aa). NADP(+)-binding positions include 45–48, arginine 68, arginine 76, serine 78, and 108–110; these read CGAQ and DKQ. The active site involves histidine 132. Position 158 (glycine 158) interacts with NADP(+). KARI C-terminal knotted domains lie at 209 to 344 and 345 to 484; these read SFVA…NAPQ and FEGK…MTDM. Mg(2+) contacts are provided by aspartate 217, glutamate 221, glutamate 389, and glutamate 393. Serine 414 provides a ligand contact to substrate.

It belongs to the ketol-acid reductoisomerase family. The cofactor is Mg(2+).

The catalysed reaction is (2R)-2,3-dihydroxy-3-methylbutanoate + NADP(+) = (2S)-2-acetolactate + NADPH + H(+). It catalyses the reaction (2R,3R)-2,3-dihydroxy-3-methylpentanoate + NADP(+) = (S)-2-ethyl-2-hydroxy-3-oxobutanoate + NADPH + H(+). It functions in the pathway amino-acid biosynthesis; L-isoleucine biosynthesis; L-isoleucine from 2-oxobutanoate: step 2/4. It participates in amino-acid biosynthesis; L-valine biosynthesis; L-valine from pyruvate: step 2/4. Functionally, involved in the biosynthesis of branched-chain amino acids (BCAA). Catalyzes an alkyl-migration followed by a ketol-acid reduction of (S)-2-acetolactate (S2AL) to yield (R)-2,3-dihydroxy-isovalerate. In the isomerase reaction, S2AL is rearranged via a Mg-dependent methyl migration to produce 3-hydroxy-3-methyl-2-ketobutyrate (HMKB). In the reductase reaction, this 2-ketoacid undergoes a metal-dependent reduction by NADPH to yield (R)-2,3-dihydroxy-isovalerate. The chain is Ketol-acid reductoisomerase (NADP(+)) from Serratia proteamaculans (strain 568).